The chain runs to 169 residues: General odorant-binding protein 57a (169 aa).

The first 20 residues, 1–20 (MFNTRLAIFLLLIVVSLSQA), serve as a signal peptide directing secretion. Intrachain disulfides connect cysteine 39-cysteine 77, cysteine 73-cysteine 120, and cysteine 111-cysteine 129.

It belongs to the PBP/GOBP family.

Its function is as follows. Present in the aqueous fluid surrounding olfactory sensory dendrites and are thought to aid in the capture and transport of hydrophobic odorants into and through this fluid. In Drosophila melanogaster (Fruit fly), this protein is General odorant-binding protein 57a.